A 33-amino-acid chain; its full sequence is Cytochrome b6-f complex subunit 8 (33 aa).

The chain crosses the membrane as a helical span at residues 2-22 (LFTVAWASLAAMFSFSIAMVV).

This sequence belongs to the PetN family. The 4 large subunits of the cytochrome b6-f complex are cytochrome b6, subunit IV (17 kDa polypeptide, PetD), cytochrome f and the Rieske protein, while the 4 small subunits are PetG, PetL, PetM and PetN. The complex functions as a dimer.

It localises to the cellular thylakoid membrane. In terms of biological role, component of the cytochrome b6-f complex, which mediates electron transfer between photosystem II (PSII) and photosystem I (PSI), cyclic electron flow around PSI, and state transitions. This chain is Cytochrome b6-f complex subunit 8, found in Synechococcus sp. (strain CC9902).